The sequence spans 155 residues: 6,7-dimethyl-8-ribityllumazine synthase (155 aa).

Residues Trp24, 58-60 (AFE), and 82-84 (AVI) each bind 5-amino-6-(D-ribitylamino)uracil. 87–88 (GT) is a (2S)-2-hydroxy-3-oxobutyl phosphate binding site. Catalysis depends on His90, which acts as the Proton donor. A 5-amino-6-(D-ribitylamino)uracil-binding site is contributed by Phe115. (2S)-2-hydroxy-3-oxobutyl phosphate is bound at residue Arg129.

Belongs to the DMRL synthase family. Forms an icosahedral capsid composed of 60 subunits, arranged as a dodecamer of pentamers.

It carries out the reaction (2S)-2-hydroxy-3-oxobutyl phosphate + 5-amino-6-(D-ribitylamino)uracil = 6,7-dimethyl-8-(1-D-ribityl)lumazine + phosphate + 2 H2O + H(+). Its pathway is cofactor biosynthesis; riboflavin biosynthesis; riboflavin from 2-hydroxy-3-oxobutyl phosphate and 5-amino-6-(D-ribitylamino)uracil: step 1/2. Its function is as follows. Catalyzes the formation of 6,7-dimethyl-8-ribityllumazine by condensation of 5-amino-6-(D-ribitylamino)uracil with 3,4-dihydroxy-2-butanone 4-phosphate. This is the penultimate step in the biosynthesis of riboflavin. The chain is 6,7-dimethyl-8-ribityllumazine synthase from Saccharophagus degradans (strain 2-40 / ATCC 43961 / DSM 17024).